The chain runs to 692 residues: Structure-specific endonuclease subunit SLX4 (692 aa).

Residues 39–59 (SDDEDQDEEQETEIPPEEGDD) are disordered.

The protein belongs to the SLX4 family. As to quaternary structure, forms a heterodimer with SLX1. Phosphorylated in response to DNA damage.

It localises to the nucleus. Regulatory subunit of the SLX1-SLX4 structure-specific endonuclease that resolves DNA secondary structures generated during DNA repair and recombination. Has endonuclease activity towards branched DNA substrates, introducing single-strand cuts in duplex DNA close to junctions with ss-DNA. The polypeptide is Structure-specific endonuclease subunit SLX4 (Kluyveromyces lactis (strain ATCC 8585 / CBS 2359 / DSM 70799 / NBRC 1267 / NRRL Y-1140 / WM37) (Yeast)).